The primary structure comprises 691 residues: Calcium-binding and coiled-coil domain-containing protein 1 (691 aa).

The interval 1-30 (MEESPLSRAPSRGGVNFLNVARTYIPNTKV) is p300 KIX-binding. Residues 1-190 (MEESPLSRAP…VQELERALAT (190 aa)) are N-terminal AD (CTNNB1 binding site). A Phosphoserine modification is found at Ser4. The interaction with GATA1 stretch occupies residues 45–125 (SDWIGIFKVE…FQFREPRPMD (81 aa)). Coiled-coil stretches lie at residues 145–205 (KATV…YKGI), 232–339 (ELED…AELE), and 417–514 (QSVE…ADEK). The segment at 501–691 (RKLEARLEKV…FSTQDPFTFE (191 aa)) is C-terminal AD (CTNNB1 binding site); interaction with CCAR1. Positions 513 to 604 (EKWNEDATTE…SDSEAEDEKS (92 aa)) are disordered. Residues 653–679 (WKECPICKERFPAESDKDALEDHMDGH) form a UBZ1-type zinc finger. Positions 656, 659, 675, and 679 each coordinate Zn(2+).

This sequence belongs to the CALCOCO family. Part of a calphoglin complex consisting of CALCOCO1, PPA1 and PGM. Interacts with the bHLH-PAS domains of GRIP1, AHR and ARNT. Interacts with CTNNB1 via both its N- and C-terminal regions. Interacts with EP300. Interacts with CCAR1 (via N-terminus) and GATA1.

Its subcellular location is the cytoplasm. The protein localises to the nucleus. In terms of biological role, functions as a coactivator for aryl hydrocarbon and nuclear receptors (NR). Recruited to promoters through its contact with the N-terminal basic helix-loop-helix-Per-Arnt-Sim (PAS) domain of transcription factors or coactivators, such as NCOA2. During ER-activation acts synergistically in combination with other NCOA2-binding proteins, such as EP300, CREBBP and CARM1. Involved in the transcriptional activation of target genes in the Wnt/CTNNB1 pathway. Functions as a secondary coactivator in LEF1-mediated transcriptional activation via its interaction with CTNNB1. Coactivator function for nuclear receptors and LEF1/CTNNB1 involves differential utilization of two different activation regions. In association with CCAR1 enhances GATA1- and MED1-mediated transcriptional activation from the gamma-globin promoter during erythroid differentiation of K562 erythroleukemia cells. Functionally, seems to enhance inorganic pyrophosphatase thus activating phosphogluomutase (PMG). Probably functions as a component of the calphoglin complex, which is involved in linking cellular metabolism (phosphate and glucose metabolism) with other core functions including protein synthesis and degradation, calcium signaling and cell growth. The sequence is that of Calcium-binding and coiled-coil domain-containing protein 1 (CALCOCO1) from Pongo abelii (Sumatran orangutan).